The following is a 398-amino-acid chain: 4-hydroxy-3-methylbut-2-enyl diphosphate reductase (398 aa).

Cys-66 contributes to the [4Fe-4S] cluster binding site. His-96 contacts (2E)-4-hydroxy-3-methylbut-2-enyl diphosphate. His-96 lines the dimethylallyl diphosphate pocket. Isopentenyl diphosphate is bound at residue His-96. Cys-157 lines the [4Fe-4S] cluster pocket. A (2E)-4-hydroxy-3-methylbut-2-enyl diphosphate-binding site is contributed by His-185. His-185 contributes to the dimethylallyl diphosphate binding site. An isopentenyl diphosphate-binding site is contributed by His-185. Glu-187 (proton donor) is an active-site residue. Thr-250 lines the (2E)-4-hydroxy-3-methylbut-2-enyl diphosphate pocket. Cys-288 provides a ligand contact to [4Fe-4S] cluster. 4 residues coordinate (2E)-4-hydroxy-3-methylbut-2-enyl diphosphate: Ser-317, Ser-318, Asn-319, and Ser-379. Ser-317, Ser-318, Asn-319, and Ser-379 together coordinate dimethylallyl diphosphate. Isopentenyl diphosphate is bound by residues Ser-317, Ser-318, Asn-319, and Ser-379.

The protein belongs to the IspH family. Requires [4Fe-4S] cluster as cofactor.

The enzyme catalyses isopentenyl diphosphate + 2 oxidized [2Fe-2S]-[ferredoxin] + H2O = (2E)-4-hydroxy-3-methylbut-2-enyl diphosphate + 2 reduced [2Fe-2S]-[ferredoxin] + 2 H(+). The catalysed reaction is dimethylallyl diphosphate + 2 oxidized [2Fe-2S]-[ferredoxin] + H2O = (2E)-4-hydroxy-3-methylbut-2-enyl diphosphate + 2 reduced [2Fe-2S]-[ferredoxin] + 2 H(+). Its pathway is isoprenoid biosynthesis; dimethylallyl diphosphate biosynthesis; dimethylallyl diphosphate from (2E)-4-hydroxy-3-methylbutenyl diphosphate: step 1/1. It participates in isoprenoid biosynthesis; isopentenyl diphosphate biosynthesis via DXP pathway; isopentenyl diphosphate from 1-deoxy-D-xylulose 5-phosphate: step 6/6. Functionally, catalyzes the conversion of 1-hydroxy-2-methyl-2-(E)-butenyl 4-diphosphate (HMBPP) into a mixture of isopentenyl diphosphate (IPP) and dimethylallyl diphosphate (DMAPP). Acts in the terminal step of the DOXP/MEP pathway for isoprenoid precursor biosynthesis. The protein is 4-hydroxy-3-methylbut-2-enyl diphosphate reductase of Synechococcus sp. (strain ATCC 27144 / PCC 6301 / SAUG 1402/1) (Anacystis nidulans).